Reading from the N-terminus, the 373-residue chain is Erythronate-4-phosphate dehydrogenase (373 aa).

Substrate is bound by residues Ser-45 and Thr-67. NAD(+) contacts are provided by residues Asp-147, 207–209 (ASR), and Asp-233. Arg-209 is an active-site residue. The active site involves Glu-238. The active-site Proton donor is the His-255. An NAD(+)-binding site is contributed by Gly-258.

Belongs to the D-isomer specific 2-hydroxyacid dehydrogenase family. PdxB subfamily. In terms of assembly, homodimer.

It is found in the cytoplasm. The enzyme catalyses 4-phospho-D-erythronate + NAD(+) = (R)-3-hydroxy-2-oxo-4-phosphooxybutanoate + NADH + H(+). The protein operates within cofactor biosynthesis; pyridoxine 5'-phosphate biosynthesis; pyridoxine 5'-phosphate from D-erythrose 4-phosphate: step 2/5. In terms of biological role, catalyzes the oxidation of erythronate-4-phosphate to 3-hydroxy-2-oxo-4-phosphonooxybutanoate. The polypeptide is Erythronate-4-phosphate dehydrogenase (Pseudoalteromonas translucida (strain TAC 125)).